We begin with the raw amino-acid sequence, 257 residues long: 3-dehydroquinate dehydratase (257 aa).

3-dehydroquinate contacts are provided by residues 50–52 (EWR) and Arg86. His147 acts as the Proton donor/acceptor in catalysis. Residue Lys174 is the Schiff-base intermediate with substrate of the active site. Residues Arg216, Ser235, and Gln239 each contribute to the 3-dehydroquinate site.

It belongs to the type-I 3-dehydroquinase family. Homodimer.

It catalyses the reaction 3-dehydroquinate = 3-dehydroshikimate + H2O. The protein operates within metabolic intermediate biosynthesis; chorismate biosynthesis; chorismate from D-erythrose 4-phosphate and phosphoenolpyruvate: step 3/7. Functionally, involved in the third step of the chorismate pathway, which leads to the biosynthesis of aromatic amino acids. Catalyzes the cis-dehydration of 3-dehydroquinate (DHQ) and introduces the first double bond of the aromatic ring to yield 3-dehydroshikimate. The chain is 3-dehydroquinate dehydratase from Geobacillus kaustophilus (strain HTA426).